Consider the following 160-residue polypeptide: Cyanate hydratase (160 aa).

Active-site residues include R100, E103, and S126.

The protein belongs to the cyanase family.

The catalysed reaction is cyanate + hydrogencarbonate + 3 H(+) = NH4(+) + 2 CO2. Functionally, catalyzes the reaction of cyanate with bicarbonate to produce ammonia and carbon dioxide. The polypeptide is Cyanate hydratase (Penicillium rubens (strain ATCC 28089 / DSM 1075 / NRRL 1951 / Wisconsin 54-1255) (Penicillium chrysogenum)).